A 98-amino-acid chain; its full sequence is Large ribosomal subunit protein mL53 (98 aa).

It belongs to the mitochondrion-specific ribosomal protein mL53 family. Component of the mitochondrial large ribosomal subunit (mt-LSU). Mature yeast 74S mitochondrial ribosomes consist of a small (37S) and a large (54S) subunit. The 37S small subunit contains a 15S ribosomal RNA (15S mt-rRNA) and 34 different proteins. The 54S large subunit contains a 21S rRNA (21S mt-rRNA) and 46 different proteins.

It is found in the mitochondrion. In terms of biological role, component of the mitochondrial ribosome (mitoribosome), a dedicated translation machinery responsible for the synthesis of mitochondrial genome-encoded proteins, including at least some of the essential transmembrane subunits of the mitochondrial respiratory chain. The mitoribosomes are attached to the mitochondrial inner membrane and translation products are cotranslationally integrated into the membrane. In Saccharomyces cerevisiae (strain ATCC 204508 / S288c) (Baker's yeast), this protein is Large ribosomal subunit protein mL53 (MRPL44).